Reading from the N-terminus, the 426-residue chain is Glutamate-1-semialdehyde 2,1-aminomutase (426 aa).

Lysine 265 is subject to N6-(pyridoxal phosphate)lysine.

Belongs to the class-III pyridoxal-phosphate-dependent aminotransferase family. HemL subfamily. Homodimer. The cofactor is pyridoxal 5'-phosphate.

It localises to the cytoplasm. It catalyses the reaction (S)-4-amino-5-oxopentanoate = 5-aminolevulinate. It functions in the pathway porphyrin-containing compound metabolism; protoporphyrin-IX biosynthesis; 5-aminolevulinate from L-glutamyl-tRNA(Glu): step 2/2. The chain is Glutamate-1-semialdehyde 2,1-aminomutase from Yersinia enterocolitica serotype O:8 / biotype 1B (strain NCTC 13174 / 8081).